Here is a 156-residue protein sequence, read N- to C-terminus: Transcriptional regulator MraZ (156 aa).

2 consecutive SpoVT-AbrB domains span residues 7–64 and 93–136; these read KERH…EPSV and LEMV…EPAR.

The protein belongs to the MraZ family. As to quaternary structure, forms oligomers.

The protein localises to the cytoplasm. It localises to the nucleoid. This is Transcriptional regulator MraZ from Chlorobium phaeovibrioides (strain DSM 265 / 1930) (Prosthecochloris vibrioformis (strain DSM 265)).